A 262-amino-acid polypeptide reads, in one-letter code: Acidic leucine-rich nuclear phosphoprotein 32 family member B (262 aa).

LRR repeat units follow at residues 16–40 (PGEV…LSSD), 43–64 (NLEF…PKLN), 65–87 (KLRK…AERT), and 89–110 (NLTH…EPLK). Residues 123–161 (CEVTMLINYRESVFTLLPQLTYLDGFDADEQEAPDSDPE) enclose the LRRCT domain. Residues 150–233 (ADEQEAPDSD…EDEEDDEADD (84 aa)) show a composition bias toward acidic residues. The tract at residues 150–262 (ADEQEAPDSD…PEDEEDDEDD (113 aa)) is disordered. Positions 240–243 (KRKR) match the Nuclear localization signal motif. A compositionally biased stretch (acidic residues) spans 247–262 (DEGEEDPEDEEDDEDD).

Belongs to the ANP32 family. In terms of assembly, interacts with histones H3 and H4. Interacts with KLF5; this interaction induces promoter region-specific histone incorporation and inhibition of histone acetylation by ANP32B. In terms of processing, directly cleaved by caspase-3/CASP3.

It is found in the nucleus. Multifunctional protein that is involved in the regulation of many processes including cell proliferation, apoptosis, cell cycle progression or transcription. Regulates the proliferation of neuronal stem cells, differentiation of leukemic cells and progression from G1 to S phase of the cell cycle. As negative regulator of caspase-3-dependent apoptosis, may act as an antagonist of ANP32A in regulating tissue homeostasis. Exhibits histone chaperone properties, able to recruit histones to certain promoters, thus regulating the transcription of specific genes. Also plays an essential role in the nucleocytoplasmic transport of specific mRNAs via the uncommon nuclear mRNA export receptor XPO1/CRM1. This Gallus gallus (Chicken) protein is Acidic leucine-rich nuclear phosphoprotein 32 family member B (ANP32B).